A 289-amino-acid chain; its full sequence is MSWLTKLLPPKIKREQGPQRRGNLPEGLWSKCPSCEAVLYATDLENNLQVCPKCGHHNRLNSRQRLDLLLDSEGRFEIGAEVLPVDSLKFKDSKKYPDRLMEANESTGESDSLVVLQGAIKTMPVVAAAFEFDFMGGSMGSVLGERFVRGVQAAVEQKMPFICITASGGARMQEGLFSLMQMAKTTAALTKLSAAGLPFISILTDPTMGGVSASFAFVGDVVIAEPKALIGFAGPRVIEQTVRETLPEGFQRSEFLLEKGAIDMIVDRRELRDQVARVLALLQKLPAAA.

Residues 28–289 (LWSKCPSCEA…ALLQKLPAAA (262 aa)) enclose the CoA carboxyltransferase N-terminal domain. 4 residues coordinate Zn(2+): C32, C35, C51, and C54. The segment at 32–54 (CPSCEAVLYATDLENNLQVCPKC) adopts a C4-type zinc-finger fold.

This sequence belongs to the AccD/PCCB family. As to quaternary structure, acetyl-CoA carboxylase is a heterohexamer composed of biotin carboxyl carrier protein (AccB), biotin carboxylase (AccC) and two subunits each of ACCase subunit alpha (AccA) and ACCase subunit beta (AccD). Zn(2+) serves as cofactor.

It localises to the cytoplasm. The catalysed reaction is N(6)-carboxybiotinyl-L-lysyl-[protein] + acetyl-CoA = N(6)-biotinyl-L-lysyl-[protein] + malonyl-CoA. The protein operates within lipid metabolism; malonyl-CoA biosynthesis; malonyl-CoA from acetyl-CoA: step 1/1. Functionally, component of the acetyl coenzyme A carboxylase (ACC) complex. Biotin carboxylase (BC) catalyzes the carboxylation of biotin on its carrier protein (BCCP) and then the CO(2) group is transferred by the transcarboxylase to acetyl-CoA to form malonyl-CoA. This Dechloromonas aromatica (strain RCB) protein is Acetyl-coenzyme A carboxylase carboxyl transferase subunit beta.